The chain runs to 140 residues: Protein archease (140 aa).

3 residues coordinate Ca(2+): Asp-12, Asp-139, and Leu-140.

This sequence belongs to the archease family.

In terms of biological role, activates the tRNA-splicing ligase complex by facilitating the enzymatic turnover of catalytic subunit RtcB. Acts by promoting the guanylylation of RtcB, a key intermediate step in tRNA ligation. Can also alter the NTP specificity of RtcB such that ATP, dGTP or ITP is used efficiently. May also act as a chaperone or modulator of proteins involved in DNA or RNA processing. The sequence is that of Protein archease from Methanothermobacter thermautotrophicus (strain ATCC 29096 / DSM 1053 / JCM 10044 / NBRC 100330 / Delta H) (Methanobacterium thermoautotrophicum).